We begin with the raw amino-acid sequence, 660 residues long: Threonine--tRNA ligase (660 aa).

In terms of domain architecture, TGS spans Met1 to Tyr49. The tract at residues Asp225–Pro554 is catalytic. Zn(2+)-binding residues include Cys318, His369, and His531.

It belongs to the class-II aminoacyl-tRNA synthetase family. As to quaternary structure, homodimer. It depends on Zn(2+) as a cofactor.

It is found in the cytoplasm. It carries out the reaction tRNA(Thr) + L-threonine + ATP = L-threonyl-tRNA(Thr) + AMP + diphosphate + H(+). In terms of biological role, catalyzes the attachment of threonine to tRNA(Thr) in a two-step reaction: L-threonine is first activated by ATP to form Thr-AMP and then transferred to the acceptor end of tRNA(Thr). The sequence is that of Threonine--tRNA ligase from Thermoplasma volcanium (strain ATCC 51530 / DSM 4299 / JCM 9571 / NBRC 15438 / GSS1).